A 361-amino-acid polypeptide reads, in one-letter code: Serine/threonine-protein kinase SRK2B (361 aa).

The 257-residue stretch at 4 to 260 (YELVKDIGAG…IGDIKKHPWF (257 aa)) folds into the Protein kinase domain. ATP contacts are provided by residues 10–18 (IGAGNFGVA) and K33. Catalysis depends on D123, which acts as the Proton acceptor. S154 bears the Phosphoserine mark. Residues 311–361 (AFGWGGGEDAEGKEEDAEEEVEEVEEEEDEEDEYDKTVKQVHASMGEVRVS) are disordered. Acidic residues predominate over residues 318-344 (EDAEGKEEDAEEEVEEVEEEEDEEDEY).

The protein belongs to the protein kinase superfamily. Ser/Thr protein kinase family. Expressed in seedlings.

The catalysed reaction is L-seryl-[protein] + ATP = O-phospho-L-seryl-[protein] + ADP + H(+). It catalyses the reaction L-threonyl-[protein] + ATP = O-phospho-L-threonyl-[protein] + ADP + H(+). The polypeptide is Serine/threonine-protein kinase SRK2B (SRK2B) (Arabidopsis thaliana (Mouse-ear cress)).